A 491-amino-acid polypeptide reads, in one-letter code: UDP-N-acetylmuramoyl-L-alanyl-D-glutamate--2,6-diaminopimelate ligase (491 aa).

Ser30 serves as a coordination point for UDP-N-acetyl-alpha-D-muramoyl-L-alanyl-D-glutamate. 108-114 (GTNGKTT) serves as a coordination point for ATP. Residues Asn149, 150-151 (TT), Ser177, Gln183, and Arg185 contribute to the UDP-N-acetyl-alpha-D-muramoyl-L-alanyl-D-glutamate site. Lys217 carries the post-translational modification N6-carboxylysine. Meso-2,6-diaminopimelate contacts are provided by residues Arg383, 407-410 (DNPR), Gly458, and Glu462. The short motif at 407–410 (DNPR) is the Meso-diaminopimelate recognition motif element.

Belongs to the MurCDEF family. MurE subfamily. Mg(2+) is required as a cofactor. Carboxylation is probably crucial for Mg(2+) binding and, consequently, for the gamma-phosphate positioning of ATP.

It localises to the cytoplasm. The enzyme catalyses UDP-N-acetyl-alpha-D-muramoyl-L-alanyl-D-glutamate + meso-2,6-diaminopimelate + ATP = UDP-N-acetyl-alpha-D-muramoyl-L-alanyl-gamma-D-glutamyl-meso-2,6-diaminopimelate + ADP + phosphate + H(+). Its pathway is cell wall biogenesis; peptidoglycan biosynthesis. In terms of biological role, catalyzes the addition of meso-diaminopimelic acid to the nucleotide precursor UDP-N-acetylmuramoyl-L-alanyl-D-glutamate (UMAG) in the biosynthesis of bacterial cell-wall peptidoglycan. The polypeptide is UDP-N-acetylmuramoyl-L-alanyl-D-glutamate--2,6-diaminopimelate ligase (Listeria monocytogenes serovar 1/2a (strain ATCC BAA-679 / EGD-e)).